The chain runs to 333 residues: Ribosomal RNA small subunit methyltransferase H (333 aa).

S-adenosyl-L-methionine contacts are provided by residues 42–44 (GGH), aspartate 62, phenylalanine 86, aspartate 105, and glutamine 112.

It belongs to the methyltransferase superfamily. RsmH family.

It is found in the cytoplasm. It catalyses the reaction cytidine(1402) in 16S rRNA + S-adenosyl-L-methionine = N(4)-methylcytidine(1402) in 16S rRNA + S-adenosyl-L-homocysteine + H(+). In terms of biological role, specifically methylates the N4 position of cytidine in position 1402 (C1402) of 16S rRNA. The protein is Ribosomal RNA small subunit methyltransferase H of Cupriavidus necator (strain ATCC 17699 / DSM 428 / KCTC 22496 / NCIMB 10442 / H16 / Stanier 337) (Ralstonia eutropha).